A 316-amino-acid polypeptide reads, in one-letter code: Peroxisomal targeting signal 2 receptor (316 aa).

WD repeat units lie at residues 56–96 (DTRD…GGRP), 102–142 (EHTK…SLKT), 145–185 (EHRY…SLNT), 188–228 (AHDH…RPTT), 232–272 (GHTY…DPII), and 277–316 (HHTEFVVGLDWNMFIDGQMASCSWDEQVCVWNLGRPGQFR).

Belongs to the WD repeat peroxin-7 family. In terms of assembly, interacts with PEX5; interaction only takes place when PEX7 is associated with cargo proteins.

Its subcellular location is the cytoplasm. The protein localises to the cytosol. It is found in the peroxisome matrix. In terms of biological role, receptor required for the peroxisomal import of proteins containing a C-terminal PTS2-type peroxisomal targeting signal. Specifically binds to cargo proteins containing a PTS2 peroxisomal targeting signal in the cytosol. Cargo protein-binding triggers interaction with PEX5 and formation of a ternary complex composed of PEX5 and PEX7 along with PTS2-containing cargo proteins, which is tranlocated into peroxisomes by passing through the PEX13-PEX14 docking complex. The chain is Peroxisomal targeting signal 2 receptor (pex7) from Dictyostelium discoideum (Social amoeba).